A 215-amino-acid chain; its full sequence is Histidine biosynthesis bifunctional protein HisIE (215 aa).

Positions 1 to 114 (MLKKHDLLNL…FISNKYNINF (114 aa)) are phosphoribosyl-AMP cyclohydrolase. The phosphoribosyl-ATP pyrophosphohydrolase stretch occupies residues 115 to 215 (LFKLEEIIEE…LNTNSEKLLK (101 aa)).

The protein in the N-terminal section; belongs to the PRA-CH family. It in the C-terminal section; belongs to the PRA-PH family.

The protein resides in the cytoplasm. The enzyme catalyses 1-(5-phospho-beta-D-ribosyl)-ATP + H2O = 1-(5-phospho-beta-D-ribosyl)-5'-AMP + diphosphate + H(+). It catalyses the reaction 1-(5-phospho-beta-D-ribosyl)-5'-AMP + H2O = 1-(5-phospho-beta-D-ribosyl)-5-[(5-phospho-beta-D-ribosylamino)methylideneamino]imidazole-4-carboxamide. Its pathway is amino-acid biosynthesis; L-histidine biosynthesis; L-histidine from 5-phospho-alpha-D-ribose 1-diphosphate: step 2/9. It functions in the pathway amino-acid biosynthesis; L-histidine biosynthesis; L-histidine from 5-phospho-alpha-D-ribose 1-diphosphate: step 3/9. This chain is Histidine biosynthesis bifunctional protein HisIE (hisI), found in Buchnera aphidicola subsp. Acyrthosiphon pisum (strain APS) (Acyrthosiphon pisum symbiotic bacterium).